A 248-amino-acid chain; its full sequence is PF03932 family protein CutC (248 aa).

Belongs to the CutC family.

Its subcellular location is the cytoplasm. This chain is PF03932 family protein CutC, found in Photorhabdus laumondii subsp. laumondii (strain DSM 15139 / CIP 105565 / TT01) (Photorhabdus luminescens subsp. laumondii).